The primary structure comprises 239 residues: Small ribosomal subunit protein uS3 (239 aa).

One can recognise a KH type-2 domain in the interval 39 to 109 (IRAMIQEIPE…KVQIKIKEVK (71 aa)). A disordered region spans residues 219-239 (GALLKKQRRPRTEKPAQAGRQ).

It belongs to the universal ribosomal protein uS3 family. As to quaternary structure, part of the 30S ribosomal subunit. Forms a tight complex with proteins S10 and S14.

Its function is as follows. Binds the lower part of the 30S subunit head. Binds mRNA in the 70S ribosome, positioning it for translation. This is Small ribosomal subunit protein uS3 from Treponema denticola (strain ATCC 35405 / DSM 14222 / CIP 103919 / JCM 8153 / KCTC 15104).